Here is a 460-residue protein sequence, read N- to C-terminus: Fumarate hydratase class II (460 aa).

Substrate contacts are provided by residues 95 to 97 (SGT), 126 to 129 (HPND), 136 to 138 (SSN), and T184. The active-site Proton donor/acceptor is H185. S315 is a catalytic residue. Residues S316 and 321–323 (KVN) contribute to the substrate site.

Belongs to the class-II fumarase/aspartase family. Fumarase subfamily. Homotetramer.

The protein localises to the cytoplasm. It catalyses the reaction (S)-malate = fumarate + H2O. The protein operates within carbohydrate metabolism; tricarboxylic acid cycle; (S)-malate from fumarate: step 1/1. Functionally, involved in the TCA cycle. Catalyzes the stereospecific interconversion of fumarate to L-malate. The sequence is that of Fumarate hydratase class II from Chlamydia pneumoniae (Chlamydophila pneumoniae).